The primary structure comprises 458 residues: MIKEYRTINEVVGPLMIVEKVAGVKYEELIEVRMQNGEIRQGQVLEINGDKAMVQIFEGTSNINIRDSKVRFLGHPLELGVSPDMMGRVFDGLGRLKDNGPELLPEKKLDINGEVINPVARDYPDEFIQTGISAIDHLNTLVRGQKLPVFSASGLPHKELAAQIARQANVLNSEEEFAVVFAAIGITFEEAEYFMEDFRQTGAIDRSVLFMNLANDPAIERIATPRMALTAAEYLAYEKGMHVLVIMTDMTNYCEALREISAARREVPGRRGYPGYLYTNLATLYERAGRIRGSKGSVTQIPILTMPEEDKTHPIPDLTGYITEGQIILSRELYKSGIQPPIDVLPSLSRLKDKGTGEGKTRGDHAATMNQLFSAYAQGKQAKELAVILGESALSDVDKIYAAFAQRFEEEYVNQGFDTNRSIEETLDLGWELLSMLPRTELKRIKEDMLDQYLTEGK.

This sequence belongs to the ATPase alpha/beta chains family.

In terms of biological role, produces ATP from ADP in the presence of a proton gradient across the membrane. The V-type beta chain is a regulatory subunit. This chain is V-type ATP synthase beta chain, found in Enterococcus faecalis (strain ATCC 700802 / V583).